The sequence spans 71 residues: Omega-conotoxin-like Ac6.4 (71 aa).

The signal sequence occupies residues 1-22 (MKLTCVVIVAVLLLTACQLLTA). Positions 23–45 (DDSRGTQKHRALRSDTKLSMSTR) are excised as a propeptide. Cystine bridges form between cysteine 46-cysteine 61, cysteine 53-cysteine 65, and cysteine 60-cysteine 70. Cysteine 70 is subject to Cysteine amide.

This sequence belongs to the conotoxin O1 superfamily. In terms of tissue distribution, expressed by the venom duct.

The protein resides in the secreted. Its function is as follows. Omega-conotoxins act at presynaptic membranes, they bind and block voltage-gated calcium channels (Cav). This Conus achatinus (Little frog cone) protein is Omega-conotoxin-like Ac6.4.